The sequence spans 289 residues: Beta-lactamase Toho-2 (289 aa).

The first 28 residues, 1-28 (MVTKRVQRMMSAAAACIPLLLGSPTLYA), serve as a signal peptide directing secretion. S73 acts as the Acyl-ester intermediate in catalysis. A substrate-binding site is contributed by 235 to 237 (KTG).

This sequence belongs to the class-A beta-lactamase family.

It carries out the reaction a beta-lactam + H2O = a substituted beta-amino acid. Inhibited 16-fold better by the beta-lactamase inhibitor tazobactam than by clavulanic acid. In terms of biological role, hydrolyzes beta-lactam antibiotics such as penicillin G, carbenicillin, cephaloridine, cefoxitin, cefotaxime, ceftazidime, and aztreonam. Has especially increased relative hydrolysis rates for cephalothin, cephaloridine, cefotaxime and ceftizoxime. This Escherichia coli protein is Beta-lactamase Toho-2 (bla).